Here is a 613-residue protein sequence, read N- to C-terminus: pH-response transcription factor pacC/RIM101 (613 aa).

Residues 1-61 (MSPSAPEQKP…SSTAPSTSSD (61 aa)) are disordered. Positions 11–60 (QLQQQQQQQQQGSSSGDSSSGSVNDSKSVTPAPSATSSTSQSSTAPSTSS) are enriched in low complexity. 3 C2H2-type zinc fingers span residues 64–89 (LICRWNACNQKFPAPEALYEHICERH), 100–124 (LTCQWNSCRTTTVKRDHITSHIRVH), and 130–152 (HKCEFCGKSFKRPQDLKKHVKTH). The segment covering 146–157 (KKHVKTHADDSV) has biased composition (basic and acidic residues). 4 disordered regions span residues 146–186 (KKHV…YDHT), 371–391 (NTPSPPTSHRSPTGMHVGADG), 406–535 (AISS…ATRE), and 565–613 (EFVE…MPGA). A compositionally biased stretch (low complexity) spans 417 to 441 (PPSSSMSYTSGHSPSPSSSAMSPQS). Polar residues-rich tracts occupy residues 442-460 (RHGSTASVMYPTLPTSLPA) and 506-517 (SGASTPKASESA). Positions 451 to 454 (YPTL) match the YPX[LI] motif 1 motif. The YPX[LI] motif 2 signature appears at 605–608 (YPIL).

The protein belongs to the pacC/RIM101 family. Binds to DNA. Activated by C-terminal proteolytic cleavage by signaling protease (probably palB/RIM13) at neutral to alkaline ambient pH.

The protein localises to the cytoplasm. The protein resides in the nucleus. Transcription factor that mediates regulation of both acid- and alkaline-expressed genes in response to ambient pH. At alkaline ambient pH, activates transcription of alkaline-expressed genes (including PAC1 itself) and represses transcription of acid-expressed genes. The sequence is that of pH-response transcription factor pacC/RIM101 (PAC1) from Gibberella moniliformis (Maize ear and stalk rot fungus).